A 452-amino-acid polypeptide reads, in one-letter code: Cobyrinate a,c-diamide synthase (452 aa).

The GATase cobBQ-type domain maps to 248-441 (RVAYALDAAF…LHIHFYQNPA (194 aa)). The active-site Nucleophile is the C330.

The protein belongs to the CobB/CbiA family. The cofactor is Mg(2+).

The enzyme catalyses cob(II)yrinate + 2 L-glutamine + 2 ATP + 2 H2O = cob(II)yrinate a,c diamide + 2 L-glutamate + 2 ADP + 2 phosphate + 2 H(+). It participates in cofactor biosynthesis; adenosylcobalamin biosynthesis; cob(II)yrinate a,c-diamide from sirohydrochlorin (anaerobic route): step 10/10. Functionally, catalyzes the ATP-dependent amidation of the two carboxylate groups at positions a and c of cobyrinate, using either L-glutamine or ammonia as the nitrogen source. The chain is Cobyrinate a,c-diamide synthase from Listeria innocua serovar 6a (strain ATCC BAA-680 / CLIP 11262).